We begin with the raw amino-acid sequence, 583 residues long: L-galactono-1,4-lactone dehydrogenase 1, mitochondrial (583 aa).

A mitochondrion-targeting transit peptide spans 1–36; it reads MRRLLLAGILRRASSSPSSHHHLHLVRALSASSPLP. A propeptide spans 37-78 (removed in mature form); it reads ASDADLRKYAGYALLLLGCGAATYYSFPLPPDALHKKAVPFK. Residues 45–61 form a helical membrane-spanning segment; it reads YAGYALLLLGCGAATYY. Residues 95–266 enclose the FAD-binding PCMH-type domain; that stretch reads THEVHTRVLL…AEVTLQCVER (172 aa).

It depends on FAD as a cofactor.

It localises to the mitochondrion membrane. It catalyses the reaction L-galactono-1,4-lactone + 4 Fe(III)-[cytochrome c] = L-dehydroascorbate + 4 Fe(II)-[cytochrome c] + 5 H(+). The protein operates within cofactor biosynthesis; L-ascorbate biosynthesis. Its function is as follows. Involved in the biosynthesis of ascorbic acid. The sequence is that of L-galactono-1,4-lactone dehydrogenase 1, mitochondrial (GLDH1) from Oryza sativa subsp. japonica (Rice).